The chain runs to 126 residues: Mating-type protein A1 (126 aa).

The homeobox DNA-binding region spans 70-126; sequence SPKGKSSISPQARAFLEQVFRRKQSLNSKEKEEVAKKCGITPLQVRVWFINKRMRSK.

It belongs to the MATA1 family. As to quaternary structure, binds DNA with a high specificity as a heterodimer of A1 and ALPHA2.

It is found in the nucleus. Its function is as follows. Mating type proteins are sequence specific DNA-binding proteins that act as master switches in yeast differentiation by controlling gene expression in a cell type-specific fashion. Transcriptional corepressor that, in a/alpha diploid cells, binds cooperatively with the ALPHA2 protein to a 21-bp DNA sequence termed the haploid-specific gene (hsg) operator, to repress transcription of haploid-specific genes and of MATALPHA1. This Saccharomyces cerevisiae (Baker's yeast) protein is Mating-type protein A1 (MATA1).